A 92-amino-acid polypeptide reads, in one-letter code: Small ribosomal subunit protein bS20 (92 aa).

Residues 1–20 are disordered; sequence MANIASAKKRARQAENNRAH.

The protein belongs to the bacterial ribosomal protein bS20 family.

Binds directly to 16S ribosomal RNA. The chain is Small ribosomal subunit protein bS20 from Methylococcus capsulatus (strain ATCC 33009 / NCIMB 11132 / Bath).